The following is a 168-amino-acid chain: Large ribosomal subunit protein uL10 (168 aa).

It belongs to the universal ribosomal protein uL10 family. In terms of assembly, part of the ribosomal stalk of the 50S ribosomal subunit. The N-terminus interacts with L11 and the large rRNA to form the base of the stalk. The C-terminus forms an elongated spine to which L12 dimers bind in a sequential fashion forming a multimeric L10(L12)X complex.

Its function is as follows. Forms part of the ribosomal stalk, playing a central role in the interaction of the ribosome with GTP-bound translation factors. The sequence is that of Large ribosomal subunit protein uL10 (rplJ) from Buchnera aphidicola subsp. Baizongia pistaciae (strain Bp).